The primary structure comprises 431 residues: Glutamate-1-semialdehyde 2,1-aminomutase (431 aa).

Lys-265 is subject to N6-(pyridoxal phosphate)lysine.

The protein belongs to the class-III pyridoxal-phosphate-dependent aminotransferase family. HemL subfamily. In terms of assembly, homodimer. The cofactor is pyridoxal 5'-phosphate.

The protein localises to the cytoplasm. The enzyme catalyses (S)-4-amino-5-oxopentanoate = 5-aminolevulinate. The protein operates within porphyrin-containing compound metabolism; protoporphyrin-IX biosynthesis; 5-aminolevulinate from L-glutamyl-tRNA(Glu): step 2/2. In Vibrio atlanticus (strain LGP32) (Vibrio splendidus (strain Mel32)), this protein is Glutamate-1-semialdehyde 2,1-aminomutase.